Here is a 248-residue protein sequence, read N- to C-terminus: 14-3-3 protein homolog 2 (248 aa).

It belongs to the 14-3-3 family.

The protein is 14-3-3 protein homolog 2 of Echinococcus granulosus (Hydatid tapeworm).